Reading from the N-terminus, the 835-residue chain is Leucine--tRNA ligase (835 aa).

Residues 41–52 carry the 'HIGH' region motif; sequence PYPSGQGLHVGH. Positions 611-615 match the 'KMSKS' region motif; the sequence is KMSKS. Lys614 lines the ATP pocket.

It belongs to the class-I aminoacyl-tRNA synthetase family.

It is found in the cytoplasm. The enzyme catalyses tRNA(Leu) + L-leucine + ATP = L-leucyl-tRNA(Leu) + AMP + diphosphate. This Elusimicrobium minutum (strain Pei191) protein is Leucine--tRNA ligase.